A 126-amino-acid polypeptide reads, in one-letter code: Protein ApaG (126 aa).

Residues 2–126 enclose the ApaG domain; the sequence is SALDNSIRVE…FRLATPGLLH (125 aa).

This is Protein ApaG from Shewanella oneidensis (strain ATCC 700550 / JCM 31522 / CIP 106686 / LMG 19005 / NCIMB 14063 / MR-1).